A 310-amino-acid chain; its full sequence is Protein FIP2 (310 aa).

The disordered stretch occupies residues 1–58 (MGFAPVTPAAVETYDPDVDHDDESNGLDGFRVRSKRSGKFSGGYSDSPREVGDGYGVR). Over residues 14 to 25 (YDPDVDHDDESN) the composition is skewed to acidic residues. Phosphoserine is present on residues S77 and S105. Disordered stretches follow at residues 115 to 135 (ATRLRTHGKPSSGDFSHGSGG), 152 to 171 (FKPKNFSKPEPNFSQDLDYD), and 177 to 221 (DRAE…GSSS). Positions 208 to 221 (PRNTGASNGYGSSS) are enriched in polar residues.

In terms of assembly, interacts with FRI. Interacts with WAV3.

This Arabidopsis thaliana (Mouse-ear cress) protein is Protein FIP2.